The sequence spans 276 residues: Radial spoke head protein 9 homolog (276 aa).

The protein belongs to the flagellar radial spoke RSP9 family. In terms of assembly, component of the axonemal radial spoke 1 (RS1) and 2 (RS2) complexes, at least composed of spoke head proteins RSPH1, RSPH3, RSPH9 and the cilia-specific component RSPH4A or sperm-specific component RSPH6A, spoke stalk proteins RSPH14, DNAJB13, DYDC1, ROPN1L and NME5, and the RS1 complex-specific anchor protein IQUB. Interacts with IQUB. Interacts with RSPH3B. Interacts with RSPH4A. Interacts with RSPH6A. Interacts with CFAP61. Interacts with LRRC23.

Its subcellular location is the cytoplasm. It localises to the cytoskeleton. The protein resides in the cilium axoneme. It is found in the flagellum axoneme. The protein localises to the cell projection. Its subcellular location is the kinocilium. Its function is as follows. Functions as part of axonemal radial spoke complexes that play an important part in the motility of sperm and cilia. Essential for both the radial spoke head assembly and the central pair microtubule stability in ependymal motile cilia. Required for motility of olfactory and neural cilia and for the structural integrity of ciliary axonemes in both 9+0 and 9+2 motile cilia. The chain is Radial spoke head protein 9 homolog (RSPH9) from Homo sapiens (Human).